The following is a 516-amino-acid chain: uncharacterized protein (516 aa).

The signal sequence occupies residues 1–22; the sequence is MLYRFWKTGLAIFMPGCILLSS. Cys23 carries N-palmitoyl cysteine lipidation. Cys23 carries the S-diacylglycerol cysteine lipid modification.

It belongs to the MG067/MG068/MG395 family.

It is found in the cell membrane. This is an uncharacterized protein from Mycoplasma genitalium (strain ATCC 33530 / DSM 19775 / NCTC 10195 / G37) (Mycoplasmoides genitalium).